A 63-amino-acid polypeptide reads, in one-letter code: Large ribosomal subunit protein uL29 (63 aa).

It belongs to the universal ribosomal protein uL29 family.

This Shewanella denitrificans (strain OS217 / ATCC BAA-1090 / DSM 15013) protein is Large ribosomal subunit protein uL29.